Consider the following 422-residue polypeptide: Large ribosomal subunit protein uL4 (422 aa).

At Ala-2 the chain carries N-acetylalanine. Lys-14 carries the post-translational modification N6-acetyllysine. Arg-97 carries the post-translational modification Omega-N-methylarginine. Position 106 is an N6-acetyllysine (Lys-106). Lys-239 participates in a covalent cross-link: Glycyl lysine isopeptide (Lys-Gly) (interchain with G-Cter in SUMO2). At Lys-259 the chain carries N6-acetyllysine. A Phosphothreonine modification is found at Thr-266. Residues Ser-290 and Ser-295 each carry the phosphoserine modification. Arg-300 is modified (citrulline). A Glycyl lysine isopeptide (Lys-Gly) (interchain with G-Cter in SUMO2) cross-link involves residue Lys-327. An N6-acetyllysine mark is found at Lys-333 and Lys-353. The segment at 359-422 (EAKSDQKGVQ…PTSEEKKAAA (64 aa)) is disordered. An N6-acetyllysine; alternate modification is found at Lys-361. Lys-361 participates in a covalent cross-link: Glycyl lysine isopeptide (Lys-Gly) (interchain with G-Cter in SUMO1); alternate. Position 362 is a phosphoserine (Ser-362). 2 stretches are compositionally biased toward basic and acidic residues: residues 376–385 (NKEKKAVGDK) and 402–422 (PAAE…KAAA).

This sequence belongs to the universal ribosomal protein uL4 family. In terms of assembly, component of the large ribosomal subunit. May bind IPO9 with low affinity. Interacts with RBM3. In terms of processing, citrullinated by PADI4.

It localises to the cytoplasm. Functionally, component of the large ribosomal subunit. The ribosome is a large ribonucleoprotein complex responsible for the synthesis of proteins in the cell. This chain is Large ribosomal subunit protein uL4 (RPL4), found in Bos taurus (Bovine).